Reading from the N-terminus, the 208-residue chain is Small ribosomal subunit protein uS4 (208 aa).

Residues 28-48 (YMERRPYGPGEHGRARKKQDS) form a disordered region. Positions 95–160 (MRLDALVLRA…MPPFQVAAAG (66 aa)) constitute an S4 RNA-binding domain.

It belongs to the universal ribosomal protein uS4 family. In terms of assembly, part of the 30S ribosomal subunit. Contacts protein S5. The interaction surface between S4 and S5 is involved in control of translational fidelity.

One of the primary rRNA binding proteins, it binds directly to 16S rRNA where it nucleates assembly of the body of the 30S subunit. Its function is as follows. With S5 and S12 plays an important role in translational accuracy. This is Small ribosomal subunit protein uS4 from Arthrobacter sp. (strain FB24).